The sequence spans 172 residues: Large ribosomal subunit protein uL10 (172 aa).

The protein belongs to the universal ribosomal protein uL10 family. In terms of assembly, part of the ribosomal stalk of the 50S ribosomal subunit. The N-terminus interacts with L11 and the large rRNA to form the base of the stalk. The C-terminus forms an elongated spine to which L12 dimers bind in a sequential fashion forming a multimeric L10(L12)X complex.

Its function is as follows. Forms part of the ribosomal stalk, playing a central role in the interaction of the ribosome with GTP-bound translation factors. The sequence is that of Large ribosomal subunit protein uL10 (rplJ) from Brucella abortus biovar 1 (strain 9-941).